Consider the following 431-residue polypeptide: Adenylosuccinate synthetase (431 aa).

Residues 13–19 and 41–43 contribute to the GTP site; these read GDEGKGK and GHT. Asp14 serves as the catalytic Proton acceptor. Residues Asp14 and Gly41 each coordinate Mg(2+). IMP-binding positions include 14–17, 39–42, Thr130, Arg144, Gln225, Thr240, and Arg304; these read DEGK and NAGH. His42 functions as the Proton donor in the catalytic mechanism. 300-306 contributes to the substrate binding site; the sequence is ATTGRKR. GTP-binding positions include Arg306, 332-334, and 415-417; these read KLD and STG.

This sequence belongs to the adenylosuccinate synthetase family. In terms of assembly, homodimer. The cofactor is Mg(2+).

It is found in the cytoplasm. It catalyses the reaction IMP + L-aspartate + GTP = N(6)-(1,2-dicarboxyethyl)-AMP + GDP + phosphate + 2 H(+). The protein operates within purine metabolism; AMP biosynthesis via de novo pathway; AMP from IMP: step 1/2. Plays an important role in the de novo pathway of purine nucleotide biosynthesis. Catalyzes the first committed step in the biosynthesis of AMP from IMP. In Shewanella oneidensis (strain ATCC 700550 / JCM 31522 / CIP 106686 / LMG 19005 / NCIMB 14063 / MR-1), this protein is Adenylosuccinate synthetase.